The sequence spans 229 residues: DNA mismatch repair protein MutH (229 aa).

The protein belongs to the MutH family.

Its subcellular location is the cytoplasm. Sequence-specific endonuclease that cleaves unmethylated GATC sequences. It is involved in DNA mismatch repair. In Shigella flexneri, this protein is DNA mismatch repair protein MutH.